A 410-amino-acid polypeptide reads, in one-letter code: Serine hydroxymethyltransferase (410 aa).

(6S)-5,6,7,8-tetrahydrofolate is bound by residues leucine 119 and 123 to 125 (GHL). Lysine 228 is subject to N6-(pyridoxal phosphate)lysine. 351-353 (SPF) is a binding site for (6S)-5,6,7,8-tetrahydrofolate.

Belongs to the SHMT family. In terms of assembly, homodimer. It depends on pyridoxal 5'-phosphate as a cofactor.

Its subcellular location is the cytoplasm. The enzyme catalyses (6R)-5,10-methylene-5,6,7,8-tetrahydrofolate + glycine + H2O = (6S)-5,6,7,8-tetrahydrofolate + L-serine. The protein operates within one-carbon metabolism; tetrahydrofolate interconversion. It participates in amino-acid biosynthesis; glycine biosynthesis; glycine from L-serine: step 1/1. Functionally, catalyzes the reversible interconversion of serine and glycine with tetrahydrofolate (THF) serving as the one-carbon carrier. This reaction serves as the major source of one-carbon groups required for the biosynthesis of purines, thymidylate, methionine, and other important biomolecules. Also exhibits THF-independent aldolase activity toward beta-hydroxyamino acids, producing glycine and aldehydes, via a retro-aldol mechanism. This chain is Serine hydroxymethyltransferase, found in Alkaliphilus oremlandii (strain OhILAs) (Clostridium oremlandii (strain OhILAs)).